The primary structure comprises 123 residues: Large ribosomal subunit protein bL12 (123 aa).

Belongs to the bacterial ribosomal protein bL12 family. Homodimer. Part of the ribosomal stalk of the 50S ribosomal subunit. Forms a multimeric L10(L12)X complex, where L10 forms an elongated spine to which 2 to 4 L12 dimers bind in a sequential fashion. Binds GTP-bound translation factors.

Its function is as follows. Forms part of the ribosomal stalk which helps the ribosome interact with GTP-bound translation factors. Is thus essential for accurate translation. The protein is Large ribosomal subunit protein bL12 of Parvibaculum lavamentivorans (strain DS-1 / DSM 13023 / NCIMB 13966).